Reading from the N-terminus, the 134-residue chain is Holo-[acyl-carrier-protein] synthase (134 aa).

2 residues coordinate Mg(2+): D8 and E57.

This sequence belongs to the P-Pant transferase superfamily. AcpS family. It depends on Mg(2+) as a cofactor.

The protein resides in the cytoplasm. It catalyses the reaction apo-[ACP] + CoA = holo-[ACP] + adenosine 3',5'-bisphosphate + H(+). In terms of biological role, transfers the 4'-phosphopantetheine moiety from coenzyme A to a Ser of acyl-carrier-protein. The protein is Holo-[acyl-carrier-protein] synthase of Rhizobium etli (strain ATCC 51251 / DSM 11541 / JCM 21823 / NBRC 15573 / CFN 42).